Consider the following 2327-residue polypeptide: Acetyl-CoA carboxylase 2 (2327 aa).

The segment at 1-62 (MTSTHVATLG…NGGVSDSKKL (62 aa)) is disordered. In terms of domain architecture, Biotin carboxylation spans 134-641 (PIHSVLVANN…HTGWLDTRIA (508 aa)). The ATP-grasp domain maps to 287–481 (ECCLDSIPDE…AAQVAVGMGI (195 aa)). Residue 313-370 (CQVVGYPAMIKASWGGGGKGIRKVHNDDEVRTLFKQVQGEVPGSPIFIMRLAAQSRHL) participates in ATP binding. E436, E450, and N452 together coordinate Mg(2+). Positions 436, 450, and 452 each coordinate Mn(2+). R454 is an active-site residue. The Biotinyl-binding domain occupies 768–842 (LQNDHDPSKL…QAGDLIARLD (75 aa)). K809 bears the N6-biotinyllysine mark. Positions 1568 to 1909 (PYQPLSVIDL…YIGGPLPVTT (342 aa)) constitute a CoA carboxyltransferase N-terminal domain. A carboxyltransferase region spans residues 1568–2227 (PYQPLSVIDL…EDVLAKEIRA (660 aa)). Positions 1818, 2119, and 2121 each coordinate CoA. The CoA carboxyltransferase C-terminal domain maps to 1913 to 2227 (PPDRPVAYIP…EDVLAKEIRA (315 aa)).

As to quaternary structure, homodimer. Biotin is required as a cofactor. Mg(2+) serves as cofactor. It depends on Mn(2+) as a cofactor.

It localises to the cytoplasm. It is found in the cytosol. The catalysed reaction is hydrogencarbonate + acetyl-CoA + ATP = malonyl-CoA + ADP + phosphate + H(+). It catalyses the reaction N(6)-biotinyl-L-lysyl-[protein] + hydrogencarbonate + ATP = N(6)-carboxybiotinyl-L-lysyl-[protein] + ADP + phosphate + H(+). The protein operates within lipid metabolism; malonyl-CoA biosynthesis; malonyl-CoA from acetyl-CoA: step 1/1. In terms of biological role, multifunctional enzyme that catalyzes the carboxylation of acetyl-CoA, forming malonyl-CoA, which is used in the plastid for fatty acid synthesis and in the cytosol in various biosynthetic pathways including fatty acid elongation. The polypeptide is Acetyl-CoA carboxylase 2 (ACC2) (Oryza sativa subsp. japonica (Rice)).